Reading from the N-terminus, the 397-residue chain is Pectate lyase 4 (397 aa).

The first 25 residues, 1-25 (MGIKHCCYILYFTLALVTLVQAGRL), serve as a signal peptide directing secretion. N-linked (GlcNAc...) asparagine glycosylation occurs at N36. A disulfide bridge connects residues C54 and C71. PbH1 repeat units follow at residues 159–202 (VKNV…HVTG), 203–224 (SSDI…VDVN), and 227–248 (STGV…LLGA). Positions 194, 218, and 222 each coordinate Ca(2+). Residue R274 is part of the active site.

The protein belongs to the polysaccharide lyase 1 family. Amb a subfamily. Monomer. Ca(2+) serves as cofactor. In terms of processing, the N-terminus is blocked. Pollen and flowers.

It carries out the reaction Eliminative cleavage of (1-&gt;4)-alpha-D-galacturonan to give oligosaccharides with 4-deoxy-alpha-D-galact-4-enuronosyl groups at their non-reducing ends.. Its pathway is glycan metabolism; pectin degradation; 2-dehydro-3-deoxy-D-gluconate from pectin: step 2/5. In terms of biological role, has pectate lyase activity. The protein is Pectate lyase 4 of Ambrosia artemisiifolia (Common ragweed).